A 171-amino-acid polypeptide reads, in one-letter code: CDP-archaeol synthase (171 aa).

A run of 4 helical transmembrane segments spans residues Val-11–Phe-31, Val-65–Ile-85, Leu-129–Ile-149, and Leu-151–Tyr-171.

It belongs to the CDP-archaeol synthase family. Requires Mg(2+) as cofactor.

The protein resides in the cell membrane. It catalyses the reaction 2,3-bis-O-(geranylgeranyl)-sn-glycerol 1-phosphate + CTP + H(+) = CDP-2,3-bis-O-(geranylgeranyl)-sn-glycerol + diphosphate. The protein operates within membrane lipid metabolism; glycerophospholipid metabolism. In terms of biological role, catalyzes the formation of CDP-2,3-bis-(O-geranylgeranyl)-sn-glycerol (CDP-archaeol) from 2,3-bis-(O-geranylgeranyl)-sn-glycerol 1-phosphate (DGGGP) and CTP. This reaction is the third ether-bond-formation step in the biosynthesis of archaeal membrane lipids. This is CDP-archaeol synthase from Methanothermobacter thermautotrophicus (strain ATCC 29096 / DSM 1053 / JCM 10044 / NBRC 100330 / Delta H) (Methanobacterium thermoautotrophicum).